The sequence spans 2581 residues: Chromodomain-helicase-DNA-binding protein 8 (2581 aa).

5 disordered regions span residues 22–114 (DDSF…QTST), 253–283 (VKGS…TQGE), 349–392 (QKIQ…SPGQ), 429–582 (ALSS…QVKR), and 596–615 (DEEE…PILP). Polar residues-rich tracts occupy residues 42–51 (SLDSLDQMNQ) and 94–114 (DYTT…QTST). Residues 255-267 (GSAPAGNPGATGP) show a composition bias toward low complexity. Residues 355–370 (PQPPSSQPQPQQPPST) are compositionally biased toward pro residues. Phosphoserine is present on Ser-432. Basic and acidic residues-rich tracts occupy residues 445–462 (GMEE…EKAN) and 493–516 (RPEE…EEKP). A phosphoserine mark is found at Ser-553 and Ser-562. Basic residues predominate over residues 572–582 (QKRRSNRQVKR). Residue Lys-609 forms a Glycyl lysine isopeptide (Lys-Gly) (interchain with G-Cter in SUMO) linkage. Chromo domains are found at residues 642–709 (AIVD…AQMR) and 724–790 (VEVD…RVNR). The Helicase ATP-binding domain occupies 823–997 (LFNWYNRQNC…FSLLHFLEPS (175 aa)). 836 to 843 (DEMGLGKT) provides a ligand contact to ATP. The DEAH box signature appears at 948–951 (DEAH). Residues 1137-1288 (LIDKLLPKLK…KAVLQSMSGR (152 aa)) enclose the Helicase C-terminal domain. Phosphoserine occurs at positions 1420 and 1424. The segment at 1692–1712 (EDPEYKPLQGPPKDQDDEGDP) is disordered. Residues 1789–2302 (IARREKQQRW…LVELEVECME (514 aa)) are interaction with FAM124B. Phosphoserine is present on residues Ser-1976 and Ser-1978. The interval 1991–2116 (SRTASPLPLR…TDQSRSKLYD (126 aa)) is disordered. A Phosphothreonine modification is found at Thr-1993. Ser-1995 and Ser-2008 each carry phosphoserine. Residues 2011–2021 (ETATQVPSLES) are compositionally biased toward polar residues. Lys-2025 is covalently cross-linked (Glycyl lysine isopeptide (Lys-Gly) (interchain with G-Cter in SUMO2)). Position 2046 is a phosphoserine (Ser-2046). A Phosphothreonine modification is found at Thr-2051. Acidic residues predominate over residues 2064-2073 (EDEDDSDSEL). Residues Ser-2069 and Ser-2071 each carry the phosphoserine modification. Low complexity predominate over residues 2076–2095 (SKLSPSSSSSSSSSSSSSST). Over residues 2103-2116 (EEKLTDQSRSKLYD) the composition is skewed to basic and acidic residues. 3 positions are modified to phosphoserine: Ser-2182, Ser-2200, and Ser-2202. The segment at 2189–2229 (GILGPGNHLLDSPSLTPGEYGDSPVPTPRSSSAASMAEEEA) is disordered. Residue Thr-2204 is modified to Phosphothreonine. The residue at position 2211 (Ser-2211) is a Phosphoserine. Residue Thr-2215 is modified to Phosphothreonine. The segment covering 2218 to 2229 (SSSAASMAEEEA) has biased composition (low complexity). The residue at position 2223 (Ser-2223) is a Phosphoserine. Lys-2256 is covalently cross-linked (Glycyl lysine isopeptide (Lys-Gly) (interchain with G-Cter in SUMO2)). Residues 2481 to 2581 (PSSPHVDSST…NSDSSEDADD (101 aa)) are disordered. Residues 2492–2510 (LHHHHHHPHPHHHHHHHPG) are compositionally biased toward basic residues. Ser-2519 is subject to Phosphoserine. Polar residues predominate over residues 2519–2528 (SPVTTASGTT). Over residues 2536–2550 (PEEDDDEDEEDDDDL) the composition is skewed to acidic residues.

This sequence belongs to the SNF2/RAD54 helicase family. CHD8 subfamily. As to quaternary structure, interacts with p53/TP53, histone H1, CTNNB1, CTCF and PIAS3. Component of some MLL1/MLL complex, at least composed of the core components KMT2A/MLL1, ASH2L, HCFC1/HCF1, WDR5 and RBBP5, as well as the facultative components BACC1, CHD8, E2F6, HSP70, INO80C, KANSL1, LAS1L, MAX, MCRS1, MGA, KAT8/MOF, PELP1, PHF20, PRP31, RING2, RUVB1/TIP49A, RUVB2/TIP49B, SENP3, TAF1, TAF4, TAF6, TAF7, TAF9 and TEX10. Interacts with CHD7. Interacts with FAM124B. Interacts with TLK2. Interacts with HNRNPL in an RNA-dependent manner. Post-translationally, sumoylated.

It localises to the nucleus. It catalyses the reaction ATP + H2O = ADP + phosphate + H(+). Functionally, ATP-dependent chromatin-remodeling factor, it slides nucleosomes along DNA; nucleosome sliding requires ATP. Acts as a transcription repressor by remodeling chromatin structure and recruiting histone H1 to target genes. Suppresses p53/TP53-mediated apoptosis by recruiting histone H1 and preventing p53/TP53 transactivation activity. Acts as a negative regulator of Wnt signaling pathway by regulating beta-catenin (CTNNB1) activity. Negatively regulates CTNNB1-targeted gene expression by being recruited specifically to the promoter regions of several CTNNB1 responsive genes. Involved in both enhancer blocking and epigenetic remodeling at chromatin boundary via its interaction with CTCF. Acts as a suppressor of STAT3 activity by suppressing the LIF-induced STAT3 transcriptional activity. Also acts as a transcription activator via its interaction with ZNF143 by participating in efficient U6 RNA polymerase III transcription. Regulates alternative splicing of a core group of genes involved in neuronal differentiation, cell cycle and DNA repair. Enables H3K36me3-coupled transcription elongation and co-transcriptional RNA processing likely via interaction with HNRNPL. The protein is Chromodomain-helicase-DNA-binding protein 8 of Homo sapiens (Human).